We begin with the raw amino-acid sequence, 312 residues long: DDRGK domain-containing protein 1 (312 aa).

Topologically, residues 1 to 2 (ME) are lumenal. The chain crosses the membrane as a helical span at residues 3–23 (LIILVGIAIALLVVIITLYLL). Topologically, residues 24-312 (QKKNAAPETK…ISAGGEEASS (289 aa)) are cytoplasmic. The disordered stretch occupies residues 30-163 (PETKPAAAPQ…KQQEDLEAEV (134 aa)). Low complexity predominate over residues 52–85 (RRAQIARNQRNRLRQNAPAAPAGQVAPAAGAPAA). Positions 90–99 (DHEDEGQVDA) are enriched in acidic residues. Residues 110–163 (LDEKMGAKKRAKMEAKEQKRLQREQELHDREQRKVKEAKEEAERKQQEDLEAEV) are compositionally biased toward basic and acidic residues.

The protein belongs to the DDRGK1 family. In terms of assembly, interacts with Atg9; the interaction is transient.

It is found in the endoplasmic reticulum membrane. Substrate adapter for ufmylation, the covalent attachment of the ubiquitin-like modifier UFM1 to substrate proteins. Required for ufmylation of Atg9; protects the nervous system during aging, possibly by stabilizing Atg9 and supporting its function. This chain is DDRGK domain-containing protein 1, found in Drosophila erecta (Fruit fly).